The following is a 338-amino-acid chain: Ferrochelatase (338 aa).

Histidine 202 and glutamate 283 together coordinate Fe cation.

The protein belongs to the ferrochelatase family.

It localises to the cytoplasm. It carries out the reaction heme b + 2 H(+) = protoporphyrin IX + Fe(2+). It functions in the pathway porphyrin-containing compound metabolism; protoheme biosynthesis; protoheme from protoporphyrin-IX: step 1/1. Catalyzes the ferrous insertion into protoporphyrin IX. This chain is Ferrochelatase, found in Acinetobacter baumannii (strain AB307-0294).